The chain runs to 375 residues: DNA replication and repair protein RecF (375 aa).

An ATP-binding site is contributed by 30–37 (GENAQGKT).

Belongs to the RecF family.

Its subcellular location is the cytoplasm. The RecF protein is involved in DNA metabolism; it is required for DNA replication and normal SOS inducibility. RecF binds preferentially to single-stranded, linear DNA. It also seems to bind ATP. This is DNA replication and repair protein RecF from Enterococcus faecalis (strain ATCC 700802 / V583).